A 274-amino-acid polypeptide reads, in one-letter code: Large ribosomal subunit protein uL2 (274 aa).

A disordered region spans residues 221–254 (RGTAMNPADHPHGGGEGRTFGKHPVSPWGLPTKG).

The protein belongs to the universal ribosomal protein uL2 family. Part of the 50S ribosomal subunit. Forms a bridge to the 30S subunit in the 70S ribosome.

Its function is as follows. One of the primary rRNA binding proteins. Required for association of the 30S and 50S subunits to form the 70S ribosome, for tRNA binding and peptide bond formation. It has been suggested to have peptidyltransferase activity; this is somewhat controversial. Makes several contacts with the 16S rRNA in the 70S ribosome. The protein is Large ribosomal subunit protein uL2 of Sulfurihydrogenibium sp. (strain YO3AOP1).